Consider the following 176-residue polypeptide: Ferredoxin-type protein NapF (176 aa).

2 4Fe-4S ferredoxin-type domains span residues 39-68 (VENSIFVARCTRCGDCLSVCETNILVKGDA) and 71-100 (PEVRFDNGECTFCGKCVDACKQPIFYPRDQ). [4Fe-4S] cluster is bound by residues Cys48, Cys51, Cys54, Cys58, Cys80, Cys83, Cys86, Cys90, Cys113, Cys121, Cys124, Cys128, Cys152, Cys155, Cys158, and Cys162. 4Fe-4S ferredoxin-type domains follow at residues 119 to 138 (IECRTCQDNCPANAIRFKLQ) and 143 to 172 (AQPLVNFDACNGCGACVQGCPVNAITMNDL).

The protein belongs to the NapF family. As to quaternary structure, interacts with the cytoplasmic NapA precursor. [4Fe-4S] cluster is required as a cofactor.

Its subcellular location is the cytoplasm. Could be involved in the maturation of NapA, the catalytic subunit of the periplasmic nitrate reductase, before its export into the periplasm. This chain is Ferredoxin-type protein NapF, found in Haemophilus influenzae (strain ATCC 51907 / DSM 11121 / KW20 / Rd).